The sequence spans 298 residues: 4-diphosphocytidyl-2-C-methyl-D-erythritol kinase (298 aa).

Residue Lys-25 is part of the active site. ATP is bound at residue 109–119 (PVGGGFGGGSS). Asp-151 is a catalytic residue.

It belongs to the GHMP kinase family. IspE subfamily.

The catalysed reaction is 4-CDP-2-C-methyl-D-erythritol + ATP = 4-CDP-2-C-methyl-D-erythritol 2-phosphate + ADP + H(+). It participates in isoprenoid biosynthesis; isopentenyl diphosphate biosynthesis via DXP pathway; isopentenyl diphosphate from 1-deoxy-D-xylulose 5-phosphate: step 3/6. Catalyzes the phosphorylation of the position 2 hydroxy group of 4-diphosphocytidyl-2C-methyl-D-erythritol. In Xylella fastidiosa (strain 9a5c), this protein is 4-diphosphocytidyl-2-C-methyl-D-erythritol kinase.